The sequence spans 624 residues: MEEALLSTPINPNNFPAKLWRLVNSPRYRSIRWDGRGEGLLIDQPLFEAELLSPPGPGAGGAGGAGSSGGGGGSGVGAAGAEPELFKTTNFTSFIRQLNLYGFRKVVLGGPGAAGPGPGPGAGGPAGDGPLHHFHSPHFRRDQPQLLVHLKRLTSANKAKLAAGLEVPCRPPNRFQRLLITSASASASASTSPLQHQDPPPQPAGPRPEQHGPVAVGQFHRSFRRDNLSPYSYVSTSSHNHSAFPLKGLDRTPIPPRTWQNSLGMHPGQVETSPTFSDKGVPFPVLQRFPTEVTYTLQPSATSVHVQQGPQTMVSSSQKYSNYTPSAQYSQAYYPTAVLQCCSPPTHMDALSSCVTPTASSYAHCNYFQNPPMQSSYPVEFLPSNWPCSATDENKKTEVNLEAVFQIVDELHSSPKLEMVKVEPVETQCPSSQANRGQHILPNANSSNPSSTSQASQLEPLTPVGSDITSFVVGTEQAITCSLPQSPEYIYTIHTAQPLENSTMQESATIQQTHVKLKEQLNHNPSPSSVVFVQEGLPFSTPQVDSSIKCQTNPSENILPSEQMGFLISEMGPANKSTKDTGLSTPARYRERRSNSQGKSPDLHLLVDVACKQEHFPKEEELKE.

A DNA-binding region spans residues 11–228 (NPNNFPAKLW…FHRSFRRDNL (218 aa)). Disordered regions lie at residues 52-77 (LSPPGPGAGGAGGAGSSGGGGGSGVG), 112-138 (GAAGPGPGPGAGGPAGDGPLHHFHSPH), 186-214 (SASASTSPLQHQDPPPQPAGPRPEQHGPV), 429-461 (CPSSQANRGQHILPNANSSNPSSTSQASQLEPL), and 572-605 (GPANKSTKDTGLSTPARYRERRSNSQGKSPDLHL). Composition is skewed to gly residues over residues 58-77 (GAGGAGGAGSSGGGGGSGVG) and 112-127 (GAAGPGPGPGAGGPAG). 2 stretches are compositionally biased toward low complexity: residues 186–197 (SASASTSPLQHQ) and 442–457 (PNANSSNPSSTSQASQ). Residue Ser-600 is modified to Phosphoserine.

The protein belongs to the HSF family. Homooligomer. In terms of tissue distribution, highly expressed in testis particularly in spermatocytes (at protein level). Not expressed in fetal testis and ovary.

Its subcellular location is the nucleus. The protein localises to the chromosome. In terms of biological role, DNA-binding transcription factor that is essential for male fertility, spermatogenesis and meiotic prophase progression in spermatocytes under non-stress conditions. Positvely and negatively regulates gene expression to ensure progression of meiotic prophase beyond pachytene stage in spermatocytes. Plays a role in male germline meiotic sex chromosome remodeling and silencing through regulation of SMARCA4. This is Heat shock factor protein 5 (Hsf5) from Mus musculus (Mouse).